We begin with the raw amino-acid sequence, 824 residues long: C-Jun-amino-terminal kinase-interacting protein 2 (824 aa).

Disordered stretches follow at residues Met-1–Ser-28, Ile-40–Leu-160, Cys-172–Trp-349, and Glu-361–Asp-501. Positions Asp-77 to Glu-110 are enriched in acidic residues. Positions Glu-110 to Glu-275 are JNK-binding domain (JBD). Residues Leu-141–Gly-156 are compositionally biased toward polar residues. Residues Gly-239–Ala-498 are necessary for interaction with FGF13. Ser-254, Ser-302, and Ser-305 each carry phosphoserine. A compositionally biased stretch (low complexity) spans Ile-268–Ser-305. Acidic residues predominate over residues Thr-327–Asp-346. The span at Ala-416–Pro-432 shows a compositional bias: pro residues. Residues Ala-451–Cys-467 show a composition bias toward low complexity. Residues Ser-468–Asp-484 are compositionally biased toward acidic residues. Positions Glu-604–Gly-665 constitute an SH3 domain. A PID domain is found at Pro-677–Ala-813.

Belongs to the JIP scaffold family. As to quaternary structure, forms homo- or heterooligomeric complexes. Binds specific components of the JNK signaling pathway namely JNK1, JNK2, JNK3, MAP2K7, MAP3K10, MAP3K11, MAP3K12 and MAPK13. Also binds the proline-rich domain-containing splice variant of apolipoprotein E receptor 2 (ApoER2). Binds the cytoplasmic tails of LRP1 and LRP2 (Megalin). Binds the TPR motif-containing C-terminal of kinesin light chain, Klc1, pre-assembled MAPK8IP1 scaffolding complexes are then transported as a cargo of kinesin, to the required subcellular location. Interacts with the cytoplasmic domain of APP. Interacts with DCLK2. Interacts with TIAM1 and TIAM2. Interacts with FGF13; enables the interaction with MAPK13 and may regulate the MAPK8IP2 scaffolding activity. Interacts with SH3RF2. Expressed mainly in the brain and pancreas, including insulin-secreting cells. In the nervous system, more abundantly expressed in the cerebellum, pituitary gland, occipital lobe and the amygdala. Also expressed in fetal brain. Very low levels found in uterus, ovary, prostate, colon, testis, adrenal gland, thyroid gland and salivary gland.

The protein resides in the cytoplasm. Its function is as follows. The JNK-interacting protein (JIP) group of scaffold proteins selectively mediates JNK signaling by aggregating specific components of the MAPK cascade to form a functional JNK signaling module. JIP2 inhibits IL1 beta-induced apoptosis in insulin-secreting cells. May function as a regulator of vesicle transport, through interactions with the JNK-signaling components and motor proteins. The protein is C-Jun-amino-terminal kinase-interacting protein 2 (MAPK8IP2) of Homo sapiens (Human).